We begin with the raw amino-acid sequence, 75 residues long: Large ribosomal subunit protein eL14 (75 aa).

Belongs to the eukaryotic ribosomal protein eL14 family.

This is Large ribosomal subunit protein eL14 from Methanothermobacter thermautotrophicus (strain ATCC 29096 / DSM 1053 / JCM 10044 / NBRC 100330 / Delta H) (Methanobacterium thermoautotrophicum).